The primary structure comprises 460 residues: Cobyrinate a,c-diamide synthase (460 aa).

The 193-residue stretch at 248–440 (KIAVARDAAF…THFHFGSSTK (193 aa)) folds into the GATase cobBQ-type domain. Cys-331 serves as the catalytic Nucleophile.

It belongs to the CobB/CbiA family. Mg(2+) is required as a cofactor.

The enzyme catalyses cob(II)yrinate + 2 L-glutamine + 2 ATP + 2 H2O = cob(II)yrinate a,c diamide + 2 L-glutamate + 2 ADP + 2 phosphate + 2 H(+). The protein operates within cofactor biosynthesis; adenosylcobalamin biosynthesis; cob(II)yrinate a,c-diamide from sirohydrochlorin (anaerobic route): step 10/10. Its function is as follows. Catalyzes the ATP-dependent amidation of the two carboxylate groups at positions a and c of cobyrinate, using either L-glutamine or ammonia as the nitrogen source. This Priestia megaterium (Bacillus megaterium) protein is Cobyrinate a,c-diamide synthase.